Here is a 167-residue protein sequence, read N- to C-terminus: Leptin (167 aa).

Positions 1-21 (MRCGPLYQFLWLWPYLSYVEA) are cleaved as a signal peptide. Residues C117 and C167 are joined by a disulfide bond.

This sequence belongs to the leptin family.

It is found in the secreted. Key player in the regulation of energy balance and body weight control. Once released into the circulation, has central and peripheral effects by binding LEPR, found in many tissues, which results in the activation of several major signaling pathways. In the hypothalamus, acts as an appetite-regulating factor that induces a decrease in food intake and an increase in energy consumption by inducing anorexinogenic factors and suppressing orexigenic neuropeptides, also regulates bone mass and secretion of hypothalamo-pituitary-adrenal hormones. In the periphery, increases basal metabolism, influences reproductive function, regulates pancreatic beta-cell function and insulin secretion, is pro-angiogenic for endothelial cell and affects innate and adaptive immunity. In the arcuate nucleus of the hypothalamus, activates by depolarization POMC neurons inducing FOS and SOCS3 expression to release anorexigenic peptides and inhibits by hyperpolarization NPY neurons inducing SOCS3 with a consequent reduction on release of orexigenic peptides. In addition to its known satiety inducing effect, has a modulatory role in nutrient absorption. In the intestine, reduces glucose absorption by enterocytes by activating PKC and leading to a sequential activation of p38, PI3K and ERK signaling pathways which exerts an inhibitory effect on glucose absorption. Acts as a growth factor on certain tissues, through the activation of different signaling pathways increases expression of genes involved in cell cycle regulation such as CCND1, via JAK2-STAT3 pathway, or VEGFA, via MAPK1/3 and PI3K-AKT1 pathways. May also play an apoptotic role via JAK2-STAT3 pathway and up-regulation of BIRC5 expression. Pro-angiogenic, has mitogenic activity on vascular endothelial cells and plays a role in matrix remodeling by regulating the expression of matrix metalloproteinases (MMPs) and tissue inhibitors of metalloproteinases (TIMPs). In innate immunity, modulates the activity and function of neutrophils by increasing chemotaxis and the secretion of oxygen radicals. Increases phagocytosis by macrophages and enhances secretion of pro-inflammatory mediators. Increases cytotoxic ability of NK cells. Plays a pro-inflammatory role, in synergy with IL1B, by inducing NOS2 which promotes the production of IL6, IL8 and Prostaglandin E2, through a signaling pathway that involves JAK2, PI3K, MAP2K1/MEK1 and MAPK14/p38. In adaptive immunity, promotes the switch of memory T-cells towards T helper-1 cell immune responses. Increases CD4(+)CD25(-) T-cell proliferation and reduces autophagy during TCR (T-cell receptor) stimulation, through MTOR signaling pathway activation and BCL2 up-regulation. In Bubalus bubalis (Domestic water buffalo), this protein is Leptin (LEP).